Consider the following 206-residue polypeptide: Glycerol-3-phosphate acyltransferase (206 aa).

5 helical membrane passes run 3–23 (LSLI…VIIG), 47–67 (VLGP…GTLA), 79–99 (HSLV…SIFL), 119–139 (PLFF…TSMV), and 152–172 (ILSF…VLIF).

It belongs to the PlsY family. Probably interacts with PlsX.

The protein localises to the cell membrane. The catalysed reaction is an acyl phosphate + sn-glycerol 3-phosphate = a 1-acyl-sn-glycero-3-phosphate + phosphate. It functions in the pathway lipid metabolism; phospholipid metabolism. Catalyzes the transfer of an acyl group from acyl-phosphate (acyl-PO(4)) to glycerol-3-phosphate (G3P) to form lysophosphatidic acid (LPA). This enzyme utilizes acyl-phosphate as fatty acyl donor, but not acyl-CoA or acyl-ACP. This chain is Glycerol-3-phosphate acyltransferase, found in Latilactobacillus sakei subsp. sakei (strain 23K) (Lactobacillus sakei subsp. sakei).